Reading from the N-terminus, the 445-residue chain is MNEEYDVIVLGTGLTECILSGIMSVNGKKVLHMDRNPYYGGESASITPLEDLYKRFNIPGAPPASMGRGRDWNVDLIPKFLMANGQLVKMLLFTEVTRYLDFKVTEGSFVYKGGKIYKVPSTEAEALASSLMGLFEKRRFRKFLVYVANFDENDPRTFEGVDPKKTAMREVYKKFDLGQDVIDFTGHALALYRTDDYLDQPCCETINRIKLYSESLARYGKSPYLYPLYGLGELPQGFARLSAIYGGTYMLNKPIEEIIVQNGKVIGVKSEGEIARCKQLICDPSYVKDRVEKVGQVIRVICILSHPIKNTSDANSCQIIIPQNQVNRKSDIYVCMISSAHNVAAQGKYIAIASTTVETKEPEKEIRPALELLKPIEQKFVSISDLLVPKDLGTDSQIFISRTYDATTHFETTCGDIKDIYKRMTGSEFDFEEMKRKKNDIYGED.

Residue M1 is modified to N-acetylmethionine. K112 carries the N6-acetyllysine modification. S130 bears the Phosphoserine mark. N6-acetyllysine is present on K269. S382 carries the post-translational modification Phosphoserine.

The protein belongs to the Rab GDI family. In terms of assembly, interacts with RHOH. Interacts with the GDP-bound inactive forms of RAB3A, RAB3B, RAB3C, RAB5A, RAB5B, RAB5C, RAB8A, RAB8B, RAB10, RAB12, RAB35, and RAB43; binds RAB3D to a lesser extent. Interacts with DZIP1; this interaction negatively regulates the interaction of GDI2 with GDP-bound RAB8A.

It localises to the cytoplasm. It is found in the membrane. The protein localises to the golgi apparatus. Its subcellular location is the trans-Golgi network. Functionally, GDP-dissociation inhibitor preventing the GDP to GTP exchange of most Rab proteins. By keeping these small GTPases in their inactive GDP-bound form regulates intracellular membrane trafficking. Negatively regulates protein transport to the cilium and ciliogenesis through the inhibition of RAB8A. The protein is Rab GDP dissociation inhibitor beta (GDI2) of Sus scrofa (Pig).